Consider the following 137-residue polypeptide: ATP synthase epsilon chain, chloroplastic (137 aa).

Belongs to the ATPase epsilon chain family. As to quaternary structure, F-type ATPases have 2 components, CF(1) - the catalytic core - and CF(0) - the membrane proton channel. CF(1) has five subunits: alpha(3), beta(3), gamma(1), delta(1), epsilon(1). CF(0) has three main subunits: a, b and c.

It is found in the plastid. The protein localises to the chloroplast thylakoid membrane. Functionally, produces ATP from ADP in the presence of a proton gradient across the membrane. The sequence is that of ATP synthase epsilon chain, chloroplastic from Sorghum bicolor (Sorghum).